The sequence spans 256 residues: Geranylgeranylglyceryl phosphate synthase (256 aa).

Mg(2+)-binding residues include Asp28 and Ser53. Sn-glycerol 1-phosphate contacts are provided by residues 172-178 (YLEAGSG), 203-204 (GG), and 225-226 (GT).

The protein belongs to the GGGP/HepGP synthase family. Group II subfamily. It depends on Mg(2+) as a cofactor.

Its subcellular location is the cytoplasm. The enzyme catalyses sn-glycerol 1-phosphate + (2E,6E,10E)-geranylgeranyl diphosphate = sn-3-O-(geranylgeranyl)glycerol 1-phosphate + diphosphate. It functions in the pathway membrane lipid metabolism; glycerophospholipid metabolism. Prenyltransferase that catalyzes the transfer of the geranylgeranyl moiety of geranylgeranyl diphosphate (GGPP) to the C3 hydroxyl of sn-glycerol-1-phosphate (G1P). This reaction is the first ether-bond-formation step in the biosynthesis of archaeal membrane lipids. The chain is Geranylgeranylglyceryl phosphate synthase from Methanococcus maripaludis (strain C6 / ATCC BAA-1332).